Here is a 465-residue protein sequence, read N- to C-terminus: Box C/D snoRNA protein 1 (465 aa).

Residues 1–72 (MEFAAENEGK…GSRQRPEEIP (72 aa)) form a disordered region. Ser-25 is modified (phosphoserine). A compositionally biased stretch (basic and acidic residues) spans 56-70 (EIGDGEEGSRQRPEE). Glycyl lysine isopeptide (Lys-Gly) (interchain with G-Cter in SUMO2) cross-links involve residues Lys-79, Lys-108, Lys-118, Lys-138, Lys-148, Lys-157, Lys-168, Lys-178, and Lys-195. Zn(2+)-binding residues include Cys-215, Cys-218, Cys-227, Cys-230, Cys-235, Cys-239, His-243, and Cys-249. An HIT-type zinc finger spans residues 215 to 249 (CETCGTEEAKYRCPRCMRYSCSLPCVKKHKAELTC). Lys-454 is covalently cross-linked (Glycyl lysine isopeptide (Lys-Gly) (interchain with G-Cter in SUMO2)).

The protein belongs to the BCD1 family. Interacts with FBL, SNU13, NOP58, NUFIP1, RUVBL1, RUVBL2 and TAF9. Interacts (via HIT-type zinc finger) with the RUVBL1/RUVBL2 complex in the presence of ADP.

Required for box C/D snoRNAs accumulation involved in snoRNA processing, snoRNA transport to the nucleolus and ribosome biogenesis. This chain is Box C/D snoRNA protein 1 (ZNHIT6), found in Pongo abelii (Sumatran orangutan).